The sequence spans 415 residues: Tyrosine--tRNA ligase (415 aa).

Tyr34 contributes to the L-tyrosine binding site. The 'HIGH' region signature appears at 39–48 (PSADSLHLGN). L-tyrosine-binding residues include Tyr162 and Gln166. Residues 224-228 (KFGKS) carry the 'KMSKS' region motif. Residue Lys227 participates in ATP binding. The S4 RNA-binding domain occupies 346 to 413 (IKIIDLLNLA…KRNYFLILWN (68 aa)).

Belongs to the class-I aminoacyl-tRNA synthetase family. TyrS type 1 subfamily. In terms of assembly, homodimer.

It localises to the cytoplasm. It carries out the reaction tRNA(Tyr) + L-tyrosine + ATP = L-tyrosyl-tRNA(Tyr) + AMP + diphosphate + H(+). In terms of biological role, catalyzes the attachment of tyrosine to tRNA(Tyr) in a two-step reaction: tyrosine is first activated by ATP to form Tyr-AMP and then transferred to the acceptor end of tRNA(Tyr). The sequence is that of Tyrosine--tRNA ligase from Ureaplasma parvum serovar 3 (strain ATCC 27815 / 27 / NCTC 11736).